A 225-amino-acid chain; its full sequence is Small ribosomal subunit protein uS5 (225 aa).

The S5 DRBM domain maps to 57–120 (LEEQVLDVKL…AHAKLSLIKV (64 aa)).

Belongs to the universal ribosomal protein uS5 family. As to quaternary structure, part of the 30S ribosomal subunit. Contacts protein S4.

Functionally, with S4 and S12 plays an important role in translational accuracy. This Methanococcus maripaludis (strain DSM 14266 / JCM 13030 / NBRC 101832 / S2 / LL) protein is Small ribosomal subunit protein uS5.